We begin with the raw amino-acid sequence, 124 residues long: Small ribosomal subunit protein bS6 (124 aa).

The tract at residues 97-124 is disordered; that stretch reads TGPSPMMKEVQREEAKKAAAAQPTEAQA. Low complexity predominate over residues 114-124; the sequence is AAAAQPTEAQA.

This sequence belongs to the bacterial ribosomal protein bS6 family.

Binds together with bS18 to 16S ribosomal RNA. The chain is Small ribosomal subunit protein bS6 from Paraburkholderia phymatum (strain DSM 17167 / CIP 108236 / LMG 21445 / STM815) (Burkholderia phymatum).